Consider the following 150-residue polypeptide: 3-dehydroquinate dehydratase (150 aa).

Residue Y26 is the Proton acceptor of the active site. Substrate-binding residues include N77, H83, and D90. H103 functions as the Proton donor in the catalytic mechanism. Substrate-binding positions include 104–105 (LS) and R114.

It belongs to the type-II 3-dehydroquinase family. In terms of assembly, homododecamer.

It carries out the reaction 3-dehydroquinate = 3-dehydroshikimate + H2O. Its pathway is metabolic intermediate biosynthesis; chorismate biosynthesis; chorismate from D-erythrose 4-phosphate and phosphoenolpyruvate: step 3/7. Its function is as follows. Catalyzes a trans-dehydration via an enolate intermediate. In Photorhabdus laumondii subsp. laumondii (strain DSM 15139 / CIP 105565 / TT01) (Photorhabdus luminescens subsp. laumondii), this protein is 3-dehydroquinate dehydratase.